A 50-amino-acid polypeptide reads, in one-letter code: Sperm protamine P1 (50 aa).

It belongs to the protamine P1 family. As to quaternary structure, cross-linked by interchain disulfide bonds around the DNA-helix. Testis.

The protein resides in the nucleus. Its subcellular location is the chromosome. Functionally, protamines substitute for histones in the chromatin of sperm during the haploid phase of spermatogenesis. They compact sperm DNA into a highly condensed, stable and inactive complex. The sequence is that of Sperm protamine P1 (PRM1) from Pan paniscus (Pygmy chimpanzee).